A 79-amino-acid chain; its full sequence is Conotoxin Vi6.3 (79 aa).

Residues 1-22 (MKLTCVLIITVLFLTASQLITA) form the signal peptide. Residues 23–47 (DYSRDQRQYRAVRLGDEMRNFKGAR) constitute a propeptide that is removed on maturation. Intrachain disulfides connect Cys49/Cys62, Cys56/Cys67, and Cys61/Cys77. Residues Pro60 and Pro63 each carry the 4-hydroxyproline modification.

The protein belongs to the conotoxin O1 superfamily. Expressed by the venom duct.

The protein localises to the secreted. Ion channel inhibitor that inhibits the increase in intracellular calcium upon depolarization in DRG neurons. In vivo, both intraperitoneal and intracranial injections into mice induce hyperactivity. This is Conotoxin Vi6.3 from Conus virgo (Virgin cone).